A 509-amino-acid polypeptide reads, in one-letter code: Probable cytochrome P450 4ac1 (509 aa).

Residues glutamate 317 and cysteine 454 each coordinate heme.

This sequence belongs to the cytochrome P450 family. Heme is required as a cofactor.

It localises to the endoplasmic reticulum membrane. Its subcellular location is the microsome membrane. Its function is as follows. May be involved in the metabolism of insect hormones and in the breakdown of synthetic insecticides. This is Probable cytochrome P450 4ac1 (Cyp4ac1) from Drosophila melanogaster (Fruit fly).